Reading from the N-terminus, the 954-residue chain is Valine--tRNA ligase (954 aa).

The short motif at 48–58 (PNVTGSLHMGH) is the 'HIGH' region element. The short motif at 560 to 564 (KMSKS) is the 'KMSKS' region element. Lysine 563 is a binding site for ATP. A coiled-coil region spans residues 883-953 (AGFINKEAEL…IQEQYKAIEA (71 aa)).

This sequence belongs to the class-I aminoacyl-tRNA synthetase family. ValS type 1 subfamily. In terms of assembly, monomer.

It is found in the cytoplasm. It catalyses the reaction tRNA(Val) + L-valine + ATP = L-valyl-tRNA(Val) + AMP + diphosphate. Catalyzes the attachment of valine to tRNA(Val). As ValRS can inadvertently accommodate and process structurally similar amino acids such as threonine, to avoid such errors, it has a 'posttransfer' editing activity that hydrolyzes mischarged Thr-tRNA(Val) in a tRNA-dependent manner. The polypeptide is Valine--tRNA ligase (Haemophilus influenzae (strain 86-028NP)).